The sequence spans 87 residues: Small ribosomal subunit protein bS20 (87 aa).

Positions 1 to 26 (MANTKSALKRIRQTATRTARNRAVTS) are disordered. Residues 13–23 (QTATRTARNRA) show a composition bias toward low complexity.

It belongs to the bacterial ribosomal protein bS20 family.

Its function is as follows. Binds directly to 16S ribosomal RNA. The chain is Small ribosomal subunit protein bS20 from Akkermansia muciniphila (strain ATCC BAA-835 / DSM 22959 / JCM 33894 / BCRC 81048 / CCUG 64013 / CIP 107961 / Muc).